Here is a 99-residue protein sequence, read N- to C-terminus: Putative membrane protein insertion efficiency factor (99 aa).

Belongs to the UPF0161 family.

It is found in the cell membrane. Functionally, could be involved in insertion of integral membrane proteins into the membrane. This Corynebacterium efficiens (strain DSM 44549 / YS-314 / AJ 12310 / JCM 11189 / NBRC 100395) protein is Putative membrane protein insertion efficiency factor.